A 143-amino-acid chain; its full sequence is Na(+)/H(+) antiporter subunit B (143 aa).

A run of 4 helical transmembrane segments spans residues 9-31 (LILQ…YLFL), 36-58 (APGG…LLAY), 71-93 (FIYV…FVFG), and 117-139 (ATIF…IQTI).

The protein belongs to the CPA3 antiporters (TC 2.A.63) subunit B family. Forms a heterooligomeric complex that consists of seven subunits: MrpA, MrpB, MrpC, MrpD, MrpE, MrpF and MrpG.

The protein resides in the cell membrane. In terms of biological role, mrp complex is a Na(+)/H(+) antiporter that is considered to be the major Na(+) excretion system in B.subtilis. Has a major role in Na(+) resistance and a minor role in Na(+)- and K(+)-dependent pH homeostasis as compared to TetB. MrpA may be the actual Na(+)/H(+) antiporter, although the six other Mrp proteins are all required for Na(+)/H(+) antiport activity and Na(+) resistance. MrpA is required for initiation of sporulation when external Na(+) concentration increases. Also transports Li(+) but not K(+), Ca(2+) or Mg(2+). The polypeptide is Na(+)/H(+) antiporter subunit B (mrpB) (Bacillus subtilis (strain 168)).